Reading from the N-terminus, the 229-residue chain is Ribonuclease HII (229 aa).

The RNase H type-2 domain occupies 34-225 (GPVAGVDEAG…VKAAHDQWLQ (192 aa)). Residues D40, E41, and D134 each contribute to the a divalent metal cation site.

It belongs to the RNase HII family. Mn(2+) serves as cofactor. The cofactor is Mg(2+).

The protein resides in the cytoplasm. It carries out the reaction Endonucleolytic cleavage to 5'-phosphomonoester.. Endonuclease that specifically degrades the RNA of RNA-DNA hybrids. The protein is Ribonuclease HII of Corynebacterium diphtheriae (strain ATCC 700971 / NCTC 13129 / Biotype gravis).